The chain runs to 205 residues: Golgi apparatus membrane protein TVP23 homolog B (205 aa).

Methionine 1 carries the N-acetylmethionine modification. The disordered stretch occupies residues 1–21 (MLQQDSNDDTEDVSLFDAEEE). The next 4 membrane-spanning stretches (helical) occupy residues 34–53 (PVAS…VYLL), 54–72 (CGLL…ILLL), 126–146 (IFWL…FSAL), and 152–172 (KWLA…YGYI).

The protein belongs to the TVP23 family.

The protein resides in the membrane. The sequence is that of Golgi apparatus membrane protein TVP23 homolog B (TVP23B) from Homo sapiens (Human).